The sequence spans 24 residues: Protein YahV (24 aa).

A helical transmembrane segment spans residues 4 to 24 (ILLNVLNIVFIGIAIILVIIC).

The protein resides in the cell inner membrane. The chain is Protein YahV from Escherichia coli (strain K12).